The chain runs to 386 residues: Acetylornithine aminotransferase (386 aa).

Residues 96 to 97 (GA) and F123 each bind pyridoxal 5'-phosphate. R126 is a N(2)-acetyl-L-ornithine binding site. 208–211 (DEVQ) lines the pyridoxal 5'-phosphate pocket. K237 carries the post-translational modification N6-(pyridoxal phosphate)lysine. Residue S265 coordinates N(2)-acetyl-L-ornithine. Position 266 (T266) interacts with pyridoxal 5'-phosphate.

This sequence belongs to the class-III pyridoxal-phosphate-dependent aminotransferase family. ArgD subfamily. Homodimer. It depends on pyridoxal 5'-phosphate as a cofactor.

It localises to the cytoplasm. It catalyses the reaction N(2)-acetyl-L-ornithine + 2-oxoglutarate = N-acetyl-L-glutamate 5-semialdehyde + L-glutamate. The protein operates within amino-acid biosynthesis; L-arginine biosynthesis; N(2)-acetyl-L-ornithine from L-glutamate: step 4/4. The protein is Acetylornithine aminotransferase of Bacillus anthracis.